The following is a 54-amino-acid chain: Conotoxin Cal6.17 (54 aa).

Positions methionine 1–threonine 19 are cleaved as a signal peptide. 3 cysteine pairs are disulfide-bonded: cysteine 24/cysteine 39, cysteine 32/cysteine 49, and cysteine 38/cysteine 53.

As to expression, expressed by the venom duct.

Its subcellular location is the secreted. Functionally, probable neurotoxin. This is Conotoxin Cal6.17 from Californiconus californicus (California cone).